We begin with the raw amino-acid sequence, 292 residues long: Brix domain-containing protein ZK795.3 (292 aa).

In terms of domain architecture, Brix spans 78-259 (PKIVITTSRD…PYQIKLGTLE (182 aa)).

This is Brix domain-containing protein ZK795.3 from Caenorhabditis elegans.